Here is a 110-residue protein sequence, read N- to C-terminus: Large ribosomal subunit protein P1 (110 aa).

Residues 87-110 (PAAEEKKEEEKEESDEDMGFGLFD) form a disordered region.

This sequence belongs to the eukaryotic ribosomal protein P1/P2 family. As to quaternary structure, P1 and P2 exist as dimers at the large ribosomal subunit. In terms of processing, phosphorylated.

Functionally, plays an important role in the elongation step of protein synthesis. The chain is Large ribosomal subunit protein P1 (ALTA12) from Alternaria alternata (Alternaria rot fungus).